A 114-amino-acid chain; its full sequence is Protein ORF3 (114 aa).

Hydrophobic stretches follow at residues 6 to 22 (CALGLFCCCSSCFCLCC) and 33 to 53 (AVVGGAAAVPAVVSGVTGLIL). Positions 28–68 (VSRLAAVVGGAAAVPAVVSGVTGLILSPSQSPIFIQPTPSP) are interaction with host HPX. Residues 48–72 (VTGLILSPSQSPIFIQPTPSPPMSP) form an interaction with the capsid protein region. S71 carries the phosphoserine; by host modification. Residues 72–114 (PLRPGLDLVFANPPDHSAPLGVTRPSAPPLPHVVDLPQLGPRR) form a homodimerization, and interaction with host AMBP/bikunin region. A disordered region spans residues 91–114 (LGVTRPSAPPLPHVVDLPQLGPRR). The interval 95 to 104 (RPSAPPLPHV) is interaction with host SRC, HCK, FYN, PIK3R3 and GRB2. The short motif at 96–99 (PSAP) is the PTAP/PSAP motif element.

This sequence belongs to the hepevirus ORF3 protein family. Forms homooligomers. Interacts with host SRC, HCK, FYN, PIK3R3 and GRB2 (via SH3 domain); binding does not activate the kinases. Interacts with host AMBP/bikunin and AMBP/alpha-1-microglobulin peptides. Interacts with host HPX/hemopexin. Interacts (when phosphorylated) with capsid protein ORF2. Interacts with host TSG101; this interaction plays a role in viral release from the host cell. Interacts with host SIRPA; this interaction down-regulates the phosphorylation of host IRF3. In terms of processing, palmitoylated in the N-terminus.

The protein localises to the host endoplasmic reticulum membrane. It is found in the host cytoplasm. The protein resides in the host cytoskeleton. Its subcellular location is the virion. It localises to the host cell membrane. In terms of biological role, small multifunctional phosphoprotein involved in virion morphogenesis, egress and counteracting host innate immunity. Plays critical roles in the final steps of viral release by interacting with host TSG101, a member of the vacuolar protein-sorting pathway and using other cellular host proteins involved in vesicle formation pathway. Also acts as a viroporin and forms ion conductive pores allowing viral particle release. Impairs the generation of type I interferon by down-regulating host TLR3 and TLR7 as well as their downstream signaling pathways. Down-regulates the phosphorylation of host IRF3 via the interaction with host SIRP-alpha, thereby inhibiting IFN-I expression. Interacts with host microtubules. This Hepatitis E virus genotype 1 (isolate Human/Burma) (HEV-1) protein is Protein ORF3.